The chain runs to 105 residues: UPF0235 protein Mext_2130 (105 aa).

This sequence belongs to the UPF0235 family.

The sequence is that of UPF0235 protein Mext_2130 from Methylorubrum extorquens (strain PA1) (Methylobacterium extorquens).